The following is a 241-amino-acid chain: Purine nucleoside phosphorylase DeoD-type 1 (241 aa).

Histidine 5 is a binding site for a purine D-ribonucleoside. Phosphate contacts are provided by residues glycine 21, arginine 25, arginine 44, and arginine 88–serine 91. Residues glutamate 180–glutamate 182 and serine 204–aspartate 205 contribute to the a purine D-ribonucleoside site. Aspartate 205 acts as the Proton donor in catalysis.

Belongs to the PNP/UDP phosphorylase family. As to quaternary structure, homohexamer; trimer of homodimers.

It catalyses the reaction a purine D-ribonucleoside + phosphate = a purine nucleobase + alpha-D-ribose 1-phosphate. The enzyme catalyses a purine 2'-deoxy-D-ribonucleoside + phosphate = a purine nucleobase + 2-deoxy-alpha-D-ribose 1-phosphate. In terms of biological role, catalyzes the reversible phosphorolytic breakdown of the N-glycosidic bond in the beta-(deoxy)ribonucleoside molecules, with the formation of the corresponding free purine bases and pentose-1-phosphate. The polypeptide is Purine nucleoside phosphorylase DeoD-type 1 (Photobacterium profundum (strain SS9)).